The chain runs to 375 residues: Aminomethyltransferase (375 aa).

Belongs to the GcvT family. In terms of assembly, the glycine cleavage system is composed of four proteins: P, T, L and H.

The catalysed reaction is N(6)-[(R)-S(8)-aminomethyldihydrolipoyl]-L-lysyl-[protein] + (6S)-5,6,7,8-tetrahydrofolate = N(6)-[(R)-dihydrolipoyl]-L-lysyl-[protein] + (6R)-5,10-methylene-5,6,7,8-tetrahydrofolate + NH4(+). Functionally, the glycine cleavage system catalyzes the degradation of glycine. The chain is Aminomethyltransferase from Symbiobacterium thermophilum (strain DSM 24528 / JCM 14929 / IAM 14863 / T).